The primary structure comprises 337 residues: Monoacylglycerol lipase abhd6-B (337 aa).

The Extracellular segment spans residues 1–19 (MDIDVLNMFLVAGGTLLVP). The helical; Signal-anchor for type II membrane protein transmembrane segment at 20 to 42 (LLAFMTSFLLWPAALIRIYYWYW) threads the bilayer. Residues 43–337 (RRALGMQVKY…QSTDNHKKHD (295 aa)) lie on the Cytoplasmic side of the membrane. Residues 72–313 (PSVLMLHGFS…CGHSVVMERP (242 aa)) enclose the AB hydrolase-1 domain. The active-site Nucleophile is the S148. Residues D278 and H306 each act as charge relay system in the active site.

The protein belongs to the AB hydrolase superfamily.

The protein localises to the late endosome membrane. It localises to the lysosome membrane. Its subcellular location is the mitochondrion membrane. It catalyses the reaction Hydrolyzes glycerol monoesters of long-chain fatty acids.. The catalysed reaction is 1-octanoylglycerol + H2O = octanoate + glycerol + H(+). The enzyme catalyses 1-decanoylglycerol + H2O = decanoate + glycerol + H(+). It carries out the reaction 1-dodecanoylglycerol + H2O = dodecanoate + glycerol + H(+). It catalyses the reaction 1-tetradecanoylglycerol + H2O = tetradecanoate + glycerol + H(+). The catalysed reaction is 2-hexadecanoylglycerol + H2O = glycerol + hexadecanoate + H(+). The enzyme catalyses 2-(9Z-octadecenoyl)-glycerol + H2O = glycerol + (9Z)-octadecenoate + H(+). It carries out the reaction 1-(9Z-octadecenoyl)-glycerol + H2O = glycerol + (9Z)-octadecenoate + H(+). It catalyses the reaction 2-(9Z,12Z-octadecadienoyl)-glycerol + H2O = (9Z,12Z)-octadecadienoate + glycerol + H(+). The catalysed reaction is 2-(5Z,8Z,11Z,14Z-eicosatetraenoyl)-glycerol + H2O = glycerol + (5Z,8Z,11Z,14Z)-eicosatetraenoate + H(+). The enzyme catalyses 1-(5Z,8Z,11Z,14Z-eicosatetraenoyl)-glycerol + H2O = glycerol + (5Z,8Z,11Z,14Z)-eicosatetraenoate + H(+). It carries out the reaction 1-(9Z,12Z-octadecadienoyl)-glycerol + H2O = (9Z,12Z)-octadecadienoate + glycerol + H(+). It catalyses the reaction 3-(9Z-octadecenoyl)-sn-glycero-1-phospho-(3'-(9Z-octadecenoyl)-1'-sn-glycerol) + H2O = 3-(9Z-octadecenoyl)-sn-glycero-1-phospho-(1'-sn-glycerol) + (9Z)-octadecenoate + H(+). The catalysed reaction is (S,S)-2-(9Z-octadecenoyl)-sn-glycero-1-phospho-(2'-(9Z-octadecenoyl)-1'-sn-glycerol) + H2O = (S,S)-2-(9Z-octadecenoyl)-sn-glycero-1-phospho-(1'-sn-glycerol) + (9Z)-octadecenoate + H(+). The enzyme catalyses (R,R)-2-(9Z-octadecenoyl)-sn-glycero-3-phospho-(2'-(9Z-octadecenoyl)-3'-sn-glycerol) + H2O = (R,R)-2-(9Z-octadecenoyl)-sn-glycero-3-phospho-(3'-sn-glycerol) + (9Z)-octadecenoate + H(+). Functionally, lipase that preferentially hydrolysis medium-chain saturated monoacylglycerols including 2-arachidonoylglycerol. Through 2-arachidonoylglycerol degradation may regulate endocannabinoid signaling pathways. Also has a lysophosphatidyl lipase activity with a preference for lysophosphatidylglycerol among other lysophospholipids. Also able to degrade bis(monoacylglycero)phosphate (BMP) and constitutes the major enzyme for BMP catabolism. BMP, also known as lysobisphosphatidic acid, is enriched in late endosomes and lysosomes and plays a key role in the formation of intraluminal vesicles and in lipid sorting. This chain is Monoacylglycerol lipase abhd6-B (abhd6-b), found in Xenopus laevis (African clawed frog).